The sequence spans 1038 residues: Fibronectin-binding protein A (1038 aa).

The first 36 residues, 1–36 (MKNNLRYGIRKHKLGAASVFLGTMIVVGMGQDKEAA), serve as a signal peptide directing secretion. Positions 7 to 18 (YGIRKHKLGAAS) match the YSIRK-G/S signaling motif motif. The segment at 37 to 193 (ASEQKTTTVE…VSEVKGTDVT (157 aa)) is disordered. The tract at residues 37–507 (ASEQKTTTVE…SNKADGNGKN (471 aa)) is ligand-binding A region. A compositionally biased stretch (polar residues) spans 39 to 92 (EQKTTTVEENGNSATDNKTSETQTTATNVNHIEETQSYNATVTEQPSNATQVTT). Basic and acidic residues predominate over residues 112-121 (TVKEEEKPQV). A compositionally biased stretch (polar residues) spans 122–164 (KETTQPQDNSGNQRQVDLTPKKVTQNQGTETQVEVAQPRTASE). Basic and acidic residues predominate over residues 174–189 (DVAEAKEASDVSEVKG). The tract at residues 189-507 (GTDVTSKVTV…SNKADGNGKN (319 aa)) is fibrinogen/elastin/tropoelastin-binding. The segment at 508–868 (GQIIQDNDFE…EGQQTIEEDT (361 aa)) is fibronectin-binding. One copy of the B-1 repeat lies at 541 to 570 (ENQDNTPLDIDYHTAIDGEGGYVDGYIETI). A 2 X approximate tandem repeats region spans residues 541 to 600 (ENQDNTPLDIDYHTAIDGEGGYVDGYIETIEETDSSAIDIDYHTAVDSEVGHVGGYTESS). Residues 571-600 (EETDSSAIDIDYHTAVDSEVGHVGGYTESS) form a B-2 repeat. 3 disordered regions span residues 736-804 (LGYE…GGNI), 825-976 (IEED…GKVV), and 989-1015 (VAPT…NKGM). A D-1 repeat occupies 741-778 (GQNSGNQSFEEDTEEDKPKYEQGGNIVDIDFDSVPQIH). The segment at 741–898 (GQNSGNQSFE…TPEVPSEPET (158 aa)) is 4 X approximate tandem repeats. The stretch at 779 to 816 (GQNKGDQSFEEDTEKDKPKYEHGGNIIDIDFDSVPQIH) is one D-2 repeat. A D-3 repeat occupies 817-855 (GFNKHNEIIEEDTNKDKPNYQFGGHNSVDFEEDTLPKVS). Positions 825 to 834 (IEEDTNKDKP) are enriched in basic and acidic residues. Residues 856 to 898 (GQNEGQQTIEEDTTPPTPPTPEVPSEPETPMPPTPEVPSEPET) form a D-4 repeat. The span at 870–958 (PPTPPTPEVP…PAEPGKPVPP (89 aa)) shows a compositional bias: pro residues. WR repeat units lie at residues 899-912 (PTPP…EPET), 913-926 (PTPP…EPET), 927-940 (PTPP…EPET), 941-954 (PTPP…EPGK), and 955-968 (PVPP…KPSK). The interval 899 to 968 (PTPPTPEVPS…AKEEPKKPSK (70 aa)) is 5 X tandem repeats, Pro-rich (WR). The short motif at 1002 to 1006 (LPETG) is the LPXTG sorting signal element. Thr1005 is modified (pentaglycyl murein peptidoglycan amidated threonine). Residues 1006 to 1038 (GGEESTNKGMLFGGLFSILGLALLRRNKKNNKA) constitute a propeptide, removed by sortase.

Its subcellular location is the secreted. The protein resides in the cell wall. Promotes bacterial attachment to multiple substrates, such as fibronectin (Fn), fibrinogen (Fg), elastin peptides and tropoelastin. This confers to S.aureus the ability to invade endothelial cells. Promotes adherence to and aggregation of activated platelets. The chain is Fibronectin-binding protein A (fnbA) from Staphylococcus aureus (strain Mu50 / ATCC 700699).